The chain runs to 180 residues: MGNFHATTIFAIHHNGKCAMAGDGQVTFGNAVVMKHTARKVRKLFQGKVLAGFAGSVADAFTLFEMFEGKLEEYNGNLQRAAVEMAKQWRGDKMLRQLEAMLIVMDETTLLLVSGTGEVIEPDDGILAIGSGGHYALAAGRALKRHASEHLTAKEIAKASLEIAGDICVYTNHNIIVEEL.

T7 is a catalytic residue. The Na(+) site is built by G165, C168, and T171.

This sequence belongs to the peptidase T1B family. HslV subfamily. As to quaternary structure, a double ring-shaped homohexamer of HslV is capped on each side by a ring-shaped HslU homohexamer. The assembly of the HslU/HslV complex is dependent on binding of ATP.

Its subcellular location is the cytoplasm. It carries out the reaction ATP-dependent cleavage of peptide bonds with broad specificity.. Allosterically activated by HslU binding. Its function is as follows. Protease subunit of a proteasome-like degradation complex believed to be a general protein degrading machinery. This is ATP-dependent protease subunit HslV from Bacillus cytotoxicus (strain DSM 22905 / CIP 110041 / 391-98 / NVH 391-98).